Reading from the N-terminus, the 475-residue chain is tRNA-2-methylthio-N(6)-dimethylallyladenosine synthase (475 aa).

Over residues 1–10 (MHETTLKREG) the composition is skewed to basic and acidic residues. Residues 1-25 (MHETTLKREGASTPSNPTPSTHAAG) are disordered. Polar residues predominate over residues 12–23 (STPSNPTPSTHA). Residues 27 to 144 (GKIYIRTFGC…LPELIRRRRD (118 aa)) enclose the MTTase N-terminal domain. C36, C73, C107, C181, C185, and C188 together coordinate [4Fe-4S] cluster. A Radical SAM core domain is found at 167–400 (RVEGATAFVS…QALINEQAAA (234 aa)). Residues 403–466 (QSMVGTRQRL…TNSLRGRVAG (64 aa)) form the TRAM domain.

This sequence belongs to the methylthiotransferase family. MiaB subfamily. As to quaternary structure, monomer. Requires [4Fe-4S] cluster as cofactor.

It localises to the cytoplasm. The catalysed reaction is N(6)-dimethylallyladenosine(37) in tRNA + (sulfur carrier)-SH + AH2 + 2 S-adenosyl-L-methionine = 2-methylsulfanyl-N(6)-dimethylallyladenosine(37) in tRNA + (sulfur carrier)-H + 5'-deoxyadenosine + L-methionine + A + S-adenosyl-L-homocysteine + 2 H(+). Catalyzes the methylthiolation of N6-(dimethylallyl)adenosine (i(6)A), leading to the formation of 2-methylthio-N6-(dimethylallyl)adenosine (ms(2)i(6)A) at position 37 in tRNAs that read codons beginning with uridine. This is tRNA-2-methylthio-N(6)-dimethylallyladenosine synthase from Bordetella avium (strain 197N).